The chain runs to 317 residues: Probable GTP 3',8-cyclase (317 aa).

In terms of domain architecture, Radical SAM core spans 4–223 (RYGRPLEDLR…KSEIREKHFR (220 aa)). Arg13 is a binding site for GTP. 3 residues coordinate [4Fe-4S] cluster: Cys20, Cys24, and Cys27. Lys61 lines the GTP pocket. An S-adenosyl-L-methionine-binding site is contributed by Gly65. Thr91 is a binding site for GTP. Ser115 provides a ligand contact to S-adenosyl-L-methionine. A GTP-binding site is contributed by Lys152. The [4Fe-4S] cluster site is built by Cys246 and Cys249. 251–253 (RVR) provides a ligand contact to GTP. Cys263 lines the [4Fe-4S] cluster pocket.

This sequence belongs to the radical SAM superfamily. MoaA family. The cofactor is [4Fe-4S] cluster.

The catalysed reaction is GTP + AH2 + S-adenosyl-L-methionine = (8S)-3',8-cyclo-7,8-dihydroguanosine 5'-triphosphate + 5'-deoxyadenosine + L-methionine + A + H(+). The protein operates within cofactor biosynthesis; molybdopterin biosynthesis. Its function is as follows. Catalyzes the cyclization of GTP to (8S)-3',8-cyclo-7,8-dihydroguanosine 5'-triphosphate. The protein is Probable GTP 3',8-cyclase of Metallosphaera sedula (strain ATCC 51363 / DSM 5348 / JCM 9185 / NBRC 15509 / TH2).